Consider the following 474-residue polypeptide: Immunoglobulin heavy constant mu (474 aa).

Residues 1-105 are CH1; that stretch reads GSASAPTLFP…NKEKNVPLPV (105 aa). Residues 1-450 are Extracellular-facing; the sequence is GSASAPTLFP…EEGFENLWAT (450 aa). Ig-like domains follow at residues 6–102, 111–211, 229–319, and 329–430; these read PTLF…KNVP, PKVS…QNAS, PSFA…QTIS, and PDVY…RTVD. 2 disulfides stabilise this stretch: Cys28-Cys88 and Cys134-Cys197. N-linked (GlcNAc...) (complex) asparagine glycosylation occurs at Asn46. A CH2 region spans residues 106–217; sequence IAELPPKVSV…QNASSMCVPD (112 aa). An N-linked (GlcNAc...) (complex) asparagine glycan is attached at Asn209. Residues 218 to 323 are CH3; it reads QDTAIRVFAI…LKQTISRPKG (106 aa). 2 cysteine pairs are disulfide-bonded: Cys244–Cys303 and Cys351–Cys413. 2 N-linked (GlcNAc...) asparagine glycosylation sites follow: Asn272 and Asn279. Residues 324–452 are CH4; the sequence is VALHRPDVYL…GFENLWATAS (129 aa). The interval 437-453 is important for IgM oligomerization; the sequence is VSADEEGFENLWATAST. An N-linked (GlcNAc...) asparagine glycan is attached at Asp440. A helical membrane pass occupies residues 451–471; it reads ASTFIVLFLLSLFYSTTVTLF. At 472–474 the chain is on the cytoplasmic side; it reads KVK.

In terms of assembly, the basic structural unit of both sIgM and mIgM molecules consists of two identical heavy chains and two identical light chains; disulfide-linked. N-terminal variable regions of the heavy and light chains form the antigen binding sites, whereas the C-terminal constant regions of the heavy chains interact with immune receptors to mediate effector functions. As to quaternary structure, part of IgM antibody. Forms high order oligomers, homopentamers stabilized by the JCHAIN and homohexamers that lack JCHAIN. The oligomerization amplifies an inherently low affinity of IgM antibodies for the antigen by multi-point attachment (avidity). Adjacent IgM protomers associate via interchain disulfide links to form an asymmetric pentameric structure with a 50 degree gap. A single copy of JCHAIN is covalently linked to the first and the fifth IgM monomers via interchain disulfide bonds thus closing the pentamer ring. Only JCHAIN-containing IgM binds PIGR secretory component (via D1-CDR1 region); this interaction is a prerequisite for IgM transcytosis across mucosal epithelium. Pentameric sIgM interacts (via CH4 domain) with FCRM (via Ig-like domain); the interaction is glycan-independent and multivalent theoretically involving up to eight binding sites for the IgM pentamer. Interacts with FCAMR; this interaction facilitates the endocytosis of IgM-coated microbes or IgM-antigen immune complexes. Antigen-bound IgM (via the Fc region) binds to globular domains of C1q component of the complement system, all three modules C1QA, C1QB and C1QC being involved in IgM binding; this interaction is multivalent. Pentameric sIgM (via Fc region) interacts with CD5L (via SRCR2) through interchain disulfide-linkages; this interaction protects CD5L from renal excretion and provides for high levels of CD5L in circulation. Part of IgM B cell receptor complex on pre-B cells, immature and mature B cells. The BCR complex consists of one membrane-bound IgM molecule responsible for antigen binding, non-covalently associated with CD79A and CD79B signaling chains. N-glycosylated; important for IgM secretion and its localization at the plasma membrane. The interaction with FCMR is glycan-independent.

The protein localises to the secreted. It is found in the cell membrane. Functionally, constant region of immunoglobulin heavy chains. Immunoglobulins, also known as antibodies, are membrane-bound or secreted glycoproteins produced by B lymphocytes. In the recognition phase of humoral immunity, the membrane-bound immunoglobulins serve as receptors which, upon binding of a specific antigen, trigger the clonal expansion and differentiation of B lymphocytes into immunoglobulins-secreting plasma cells. Secreted immunoglobulins mediate the effector phase of humoral immunity, which results in the elimination of bound antigens. The antigen binding site is formed by the variable domain of one heavy chain, together with that of its associated light chain. Thus, each immunoglobulin has two antigen binding sites with remarkable affinity for a particular antigen. The variable domains are assembled by a process called V-(D)-J rearrangement and can then be subjected to somatic hypermutations which, after exposure to antigen and selection, allow affinity maturation for a particular antigen. Constant region of secreted IgM (sIgM), also known as the Fc region of IgM antibody. Able to multimerize, forms high order polymers, mainly pentamers and occasionally hexamers, providing for multivalency and high avidity recognition of antigens. Natural sIgM are polyreactive and recognize conserved self- and pathogen-derived structures, whereas immune sIgM are secreted only upon exposure to pathogens and are antigen-specific. Both natural and immune sIgM are required for an efficient humoral immune response to infection. Mediates sIgM effector functions mostly via Fc receptors and the complement system. On lymphoid cells binds high-affinity Fc receptor FCMR and promotes induction of an efficient neutralizing IgG response while maintaining tolerance to self-antigens. Recruits C1q complement component to initiate the classical complement pathway, facilitating the recognition and neutralization of pathogens by the host. Together with C1q and mannose-binding lectin promotes the phagocytosis of apoptotic cells by macrophages, ensuring the clearance of potential autoimmune epitopes from tissues. Involved in mucosal immunity. It is transported by transcytosis across mucosal epithelium by PIGR and secreted on the apical side in complex with PIGR secretory component to scan mucosal lining for pathogens. IgM-antigen complexes undergo FCMR-mediated retrotranscytosis across mucosal M cells toward antigen-presenting cells in mucosal lymphoid tissues. Its function is as follows. Constant region of membrane-bound IgM, part of the B cell receptor complex (BCR). IgM BCR provides constitutive tonic signaling for B cell survival. Mediates pre-BCR signaling that regulates B cell selection and rearrangement of Ig genes via allelic exclusion. This is Immunoglobulin heavy constant mu from Homo sapiens (Human).